A 129-amino-acid polypeptide reads, in one-letter code: Small ribosomal subunit protein uS11 (129 aa).

Belongs to the universal ribosomal protein uS11 family. As to quaternary structure, part of the 30S ribosomal subunit. Interacts with proteins S7 and S18. Binds to IF-3.

Its function is as follows. Located on the platform of the 30S subunit, it bridges several disparate RNA helices of the 16S rRNA. Forms part of the Shine-Dalgarno cleft in the 70S ribosome. This is Small ribosomal subunit protein uS11 from Salmonella typhi.